The sequence spans 168 residues: Peptide methionine sulfoxide reductase 2 (168 aa).

Residues 40-168 (DVKWNDALTP…NSASLNLKKD (129 aa)) form the MsrB domain. Residues cysteine 79, cysteine 82, cysteine 128, and cysteine 131 each coordinate Zn(2+). An intrachain disulfide couples cysteine 97 to cysteine 157. Cysteine 157 acts as the Nucleophile in catalysis.

This sequence belongs to the MsrB Met sulfoxide reductase family. It depends on Zn(2+) as a cofactor.

It catalyses the reaction L-methionyl-[protein] + [thioredoxin]-disulfide + H2O = L-methionyl-(R)-S-oxide-[protein] + [thioredoxin]-dithiol. Functionally, methionine-R-sulfoxide reductase which catalyzes the reduction of methionine sulfoxide (MetSO) to methionine in proteins. Plays a protective role against oxidative stress by restoring activity to proteins that have been inactivated by methionine oxidation. Protects iron-sulfur clusters from oxidative inactivation along with MXR1. Involved in the regulation of lifespan. In Saccharomyces cerevisiae (strain ATCC 204508 / S288c) (Baker's yeast), this protein is Peptide methionine sulfoxide reductase 2 (MXR2).